We begin with the raw amino-acid sequence, 335 residues long: Phosphate acyltransferase (335 aa).

Belongs to the PlsX family. Homodimer. Probably interacts with PlsY.

It is found in the cytoplasm. It catalyses the reaction a fatty acyl-[ACP] + phosphate = an acyl phosphate + holo-[ACP]. It functions in the pathway lipid metabolism; phospholipid metabolism. Functionally, catalyzes the reversible formation of acyl-phosphate (acyl-PO(4)) from acyl-[acyl-carrier-protein] (acyl-ACP). This enzyme utilizes acyl-ACP as fatty acyl donor, but not acyl-CoA. The polypeptide is Phosphate acyltransferase (Streptococcus equi subsp. equi (strain 4047)).